Consider the following 1102-residue polypeptide: WASH complex subunit 4 (1102 aa).

It belongs to the SWIP family. Component of the WASH complex.

It localises to the early endosome. Acts at least in part as component of the WASH complex which may regulate wash nucleation-promoting factor (NPF) activity and is required for its membrane targeting during endosomal sorting. During embryogenesis, not involved in the wash-dependent developmental migration of hemocytes anteriorly from the tail. The polypeptide is WASH complex subunit 4 (Drosophila melanogaster (Fruit fly)).